The chain runs to 273 residues: Gamma-glutamyl cyclotransferase gliK (273 aa).

The chain crosses the membrane as a helical span at residues 227–243 (WLGWIILTLYGLMWSYH).

This sequence belongs to the class-I pyridoxal-phosphate-dependent aminotransferase family.

The protein localises to the membrane. It catalyses the reaction an alpha-(gamma-L-glutamyl)-L-amino acid = 5-oxo-L-proline + an L-alpha-amino acid. The protein operates within mycotoxin biosynthesis. Functionally, gamma-glutamyl cyclotransferase-like protein; part of the gene cluster that mediates the biosynthesis of gliotoxin, a member of the epipolythiodioxopiperazine (ETP) class of toxins characterized by a disulfide bridged cyclic dipeptide. The first step in gliotoxin biosynthesis is the condensation of serine and phenylalanine to form the cyclo-L-phenylalanyl-L-serine diketopiperazine (DKP) by the NRPS gliP. GliP is also able to produce the DKP cyclo-L-tryptophanyl-L-serine, suggesting that the substrate specificity of the first adenylation (A) domain in gliP is sufficiently relaxed to accommodate both L-Phe and L-Trp. The cytochrome P450 monooxygenase gliC has been shown to catalyze the subsequent hydroxylation of the alpha-carbon of L-Phe in cyclo-L-phenylalanyl-L-serine whereas the second cytochrome P450 enzyme, gliF, is presumably involved in the modification of the DKP side chain. The glutathione S-transferase (GST) gliG then forms a bis-glutathionylated biosynthetic intermediate which is responsible for the sulfurization of gliotoxin. This bis-glutathionylated intermediate is subsequently processed by the gamma-glutamyl cyclotransferase gliK to remove both gamma-glutamyl moieties. Subsequent processing via gliI yields a biosynthetic intermediate, which is N-methylated via the N-methyltransferase gliN, before the gliotoxin oxidoreductase gliT-mediated disulfide bridge closure. GliN-mediated amide methylation confers stability to ETP, damping the spontaneous formation of tri- and tetrasulfides. Intracellular dithiol gliotoxin oxidized by gliT is subsequently effluxed by gliA. Gliotoxin contributes to pathogenesis during invasive aspergillosis. In macrophages and neutrophils, gliotoxin showed inhibition of various different cell functions including cytokine production, antigen presentation, phagocytosis, and production of reactive oxygen species. This Aspergillus fumigatus (strain ATCC MYA-4609 / CBS 101355 / FGSC A1100 / Af293) (Neosartorya fumigata) protein is Gamma-glutamyl cyclotransferase gliK.